An 89-amino-acid chain; its full sequence is Small ribosomal subunit protein uS15 (89 aa).

The protein belongs to the universal ribosomal protein uS15 family. In terms of assembly, part of the 30S ribosomal subunit. Forms a bridge to the 50S subunit in the 70S ribosome, contacting the 23S rRNA.

One of the primary rRNA binding proteins, it binds directly to 16S rRNA where it helps nucleate assembly of the platform of the 30S subunit by binding and bridging several RNA helices of the 16S rRNA. In terms of biological role, forms an intersubunit bridge (bridge B4) with the 23S rRNA of the 50S subunit in the ribosome. This is Small ribosomal subunit protein uS15 from Oceanobacillus iheyensis (strain DSM 14371 / CIP 107618 / JCM 11309 / KCTC 3954 / HTE831).